Here is a 574-residue protein sequence, read N- to C-terminus: Isocitrate dehydrogenase kinase/phosphatase (574 aa).

ATP contacts are provided by residues 311 to 317 and K332; that span reads APGIRGM. Residue D367 is part of the active site.

The protein belongs to the AceK family.

Its subcellular location is the cytoplasm. The catalysed reaction is L-seryl-[isocitrate dehydrogenase] + ATP = O-phospho-L-seryl-[isocitrate dehydrogenase] + ADP + H(+). In terms of biological role, bifunctional enzyme which can phosphorylate or dephosphorylate isocitrate dehydrogenase (IDH) on a specific serine residue. This is a regulatory mechanism which enables bacteria to bypass the Krebs cycle via the glyoxylate shunt in response to the source of carbon. When bacteria are grown on glucose, IDH is fully active and unphosphorylated, but when grown on acetate or ethanol, the activity of IDH declines drastically concomitant with its phosphorylation. In Shigella boydii serotype 4 (strain Sb227), this protein is Isocitrate dehydrogenase kinase/phosphatase.